The chain runs to 517 residues: Rop guanine nucleotide exchange factor 9 (517 aa).

2 disordered regions span residues 16-76 (NLDR…SETE) and 428-517 (GEET…KDRH). Residues 39–63 (MPESQTQDSLGGSPVETSRPMTSRL) show a composition bias toward polar residues. The PRONE domain maps to 65–429 (SRRQDKQQSE…SLARKQCTGE (365 aa)). Positions 66–76 (RRQDKQQSETE) are enriched in basic and acidic residues. Residues 440–452 (ETDSASAGSSNYS) are compositionally biased toward polar residues.

As to quaternary structure, interacts with ARAC11/ROP1 and ARAC10/ROP11. Interacts with PRK6. Expressed in pollen grains and pollen tubes.

Its subcellular location is the cell membrane. Guanine-nucleotide exchange factor (GEF) that acts as an activator of Rop (Rho of plants) GTPases by promoting the exchange of GDP for GTP. This chain is Rop guanine nucleotide exchange factor 9, found in Arabidopsis thaliana (Mouse-ear cress).